The primary structure comprises 423 residues: UDP-N-acetylglucosamine 1-carboxyvinyltransferase 1 (423 aa).

Residue 23–24 (KN) participates in phosphoenolpyruvate binding. UDP-N-acetyl-alpha-D-glucosamine is bound at residue Arg-96. Cys-120 serves as the catalytic Proton donor. Cys-120 is subject to 2-(S-cysteinyl)pyruvic acid O-phosphothioketal. UDP-N-acetyl-alpha-D-glucosamine is bound by residues 125–129 (RPIDL), Asp-309, and Val-331.

The protein belongs to the EPSP synthase family. MurA subfamily.

Its subcellular location is the cytoplasm. It carries out the reaction phosphoenolpyruvate + UDP-N-acetyl-alpha-D-glucosamine = UDP-N-acetyl-3-O-(1-carboxyvinyl)-alpha-D-glucosamine + phosphate. The protein operates within cell wall biogenesis; peptidoglycan biosynthesis. Functionally, cell wall formation. Adds enolpyruvyl to UDP-N-acetylglucosamine. The chain is UDP-N-acetylglucosamine 1-carboxyvinyltransferase 1 from Streptococcus mutans serotype c (strain ATCC 700610 / UA159).